Here is a 183-residue protein sequence, read N- to C-terminus: uncharacterized protein (183 aa).

This is an uncharacterized protein from Shigella flexneri.